A 238-amino-acid chain; its full sequence is MKRNTGSTITGYKAIKCFYKTTNVIELRATINVDSDDTSPIFDYETGKHSQSTFNGTDVLVTKIKTLDCQKVPDNFFKEFQCMTYDFDKVSPGSKIEYTHHFYYNKNDSDMDKKTVPKNTSNTDVIILSSDNIDGIKEKYNQLANEYDSEYFSYISSQHHLEDFSECYRNMDKISDRNNAKDKWIFQRIKENCRDKYYQELDKLLEKERKFISLLNNKSQVGNFILKHESSTTNKISG.

This sequence belongs to the mimivirus L74/L77/R857 family.

This is an uncharacterized protein from Acanthamoeba polyphaga mimivirus (APMV).